The primary structure comprises 157 residues: Succinate dehydrogenase assembly factor 2-A, mitochondrial (157 aa).

Residues 1 to 21 (MLRQVLSSTSVRRLLVSPTRC) constitute a mitochondrion transit peptide.

It belongs to the SDHAF2 family. In terms of assembly, interacts with the flavoprotein subunit within the SDH catalytic dimer.

It is found in the mitochondrion matrix. In terms of biological role, plays an essential role in the assembly of succinate dehydrogenase (SDH), an enzyme complex (also referred to as respiratory complex II) that is a component of both the tricarboxylic acid (TCA) cycle and the mitochondrial electron transport chain, and which couples the oxidation of succinate to fumarate with the reduction of ubiquinone (coenzyme Q) to ubiquinol. Required for flavinylation (covalent attachment of FAD) of the flavoprotein subunit of the SDH catalytic dimer. The sequence is that of Succinate dehydrogenase assembly factor 2-A, mitochondrial from Drosophila mojavensis (Fruit fly).